The chain runs to 428 residues: UDP-N-acetylglucosamine 1-carboxyvinyltransferase (428 aa).

Lys25–Asn26 is a binding site for phosphoenolpyruvate. Arg102 lines the UDP-N-acetyl-alpha-D-glucosamine pocket. The active-site Proton donor is the Cys126. Cys126 carries the 2-(S-cysteinyl)pyruvic acid O-phosphothioketal modification. UDP-N-acetyl-alpha-D-glucosamine-binding residues include Asp316 and Val338.

It belongs to the EPSP synthase family. MurA subfamily.

Its subcellular location is the cytoplasm. It carries out the reaction phosphoenolpyruvate + UDP-N-acetyl-alpha-D-glucosamine = UDP-N-acetyl-3-O-(1-carboxyvinyl)-alpha-D-glucosamine + phosphate. It functions in the pathway cell wall biogenesis; peptidoglycan biosynthesis. Cell wall formation. Adds enolpyruvyl to UDP-N-acetylglucosamine. This is UDP-N-acetylglucosamine 1-carboxyvinyltransferase from Anaplasma marginale (strain St. Maries).